The following is a 274-amino-acid chain: Large ribosomal subunit protein uL2cz/uL2cy (274 aa).

Disordered regions lie at residues 1–26 (MAIHLYKTSTPSTRNRTVDSRVKSNP) and 223–274 (MNPV…RRSK).

It belongs to the universal ribosomal protein uL2 family. As to quaternary structure, part of the 50S ribosomal subunit.

It localises to the plastid. The protein localises to the chloroplast. The protein is Large ribosomal subunit protein uL2cz/uL2cy (rpl2-A) of Daucus carota (Wild carrot).